A 256-amino-acid polypeptide reads, in one-letter code: MAVGKNKRLSKGKKGLKKKVVDPFTRKDWYDIKAPSIFETRNVGKTLVNRSQGLKNANDSLRGRIIEVSLADLNKDEEQSFRKIKLRVDEIQGRNCLTNFHGMDFTSDKLRSLVRKWQTLVEAHVDVKTTDGYLLRLFAIGFTKRRPTQVKKTTYAQTAQVRELRKKMFEIITREATSCDLKELVQKFVPEAIGREIEKASRSIYPLQNVYIRKAKILKAPKFDVSKLLELHGDSTDESGTRVTKDFKEPEVLESV.

A2 carries the post-translational modification N-acetylalanine; partial.

The protein belongs to the eukaryotic ribosomal protein eS1 family. As to quaternary structure, component of the small ribosomal subunit. Mature ribosomes consist of a small (40S) and a large (60S) subunit. The 40S subunit contains about 33 different proteins and 1 molecule of RNA (18S). The 60S subunit contains about 49 different proteins and 3 molecules of RNA (25S, 5.8S and 5S).

The protein resides in the cytoplasm. In Coprinopsis cinerea (strain Okayama-7 / 130 / ATCC MYA-4618 / FGSC 9003) (Inky cap fungus), this protein is Small ribosomal subunit protein eS1.